Here is a 140-residue protein sequence, read N- to C-terminus: Probable deoxyuridine 5'-triphosphate nucleotidohydrolase (140 aa).

Substrate-binding positions include 62-64, 76-79, Arg-130, and 135-136; these read RSG, GVID, and FG.

Belongs to the dUTPase family. Homotrimer. Mg(2+) is required as a cofactor.

It carries out the reaction dUTP + H2O = dUMP + diphosphate + H(+). It functions in the pathway pyrimidine metabolism; dUMP biosynthesis; dUMP from dCTP (dUTP route): step 2/2. Its function is as follows. This enzyme is involved in nucleotide metabolism: it produces dUMP, the immediate precursor of thymidine nucleotides and it decreases the intracellular concentration of dUTP so that uracil cannot be incorporated into DNA. This chain is Probable deoxyuridine 5'-triphosphate nucleotidohydrolase, found in Schizosaccharomyces pombe (strain 972 / ATCC 24843) (Fission yeast).